Here is a 63-residue protein sequence, read N- to C-terminus: Cypmaclein (63 aa).

This sequence belongs to the GASA family. Expressed in pollen (at protein level).

The protein is Cypmaclein of Cupressus sempervirens (Italian cypress).